The following is a 752-amino-acid chain: DNA ligase (752 aa).

NAD(+) is bound by residues 48–52 (DADYD), 97–98 (SL), and E131. K133 functions as the N6-AMP-lysine intermediate in the catalytic mechanism. R154, E189, K305, and K329 together coordinate NAD(+). Positions 434, 437, 452, and 458 each coordinate Zn(2+). Positions 599–615 (ADEGRRASLQPQRDKAW) are enriched in basic and acidic residues. The interval 599–618 (ADEGRRASLQPQRDKAWADT) is disordered. The BRCT domain maps to 673–752 (ATQSAVAGLT…EQWLDRIGDA (80 aa)).

It belongs to the NAD-dependent DNA ligase family. LigA subfamily. It depends on Mg(2+) as a cofactor. Mn(2+) is required as a cofactor.

It carries out the reaction NAD(+) + (deoxyribonucleotide)n-3'-hydroxyl + 5'-phospho-(deoxyribonucleotide)m = (deoxyribonucleotide)n+m + AMP + beta-nicotinamide D-nucleotide.. Its function is as follows. DNA ligase that catalyzes the formation of phosphodiester linkages between 5'-phosphoryl and 3'-hydroxyl groups in double-stranded DNA using NAD as a coenzyme and as the energy source for the reaction. It is essential for DNA replication and repair of damaged DNA. The sequence is that of DNA ligase from Jannaschia sp. (strain CCS1).